A 445-amino-acid chain; its full sequence is Cyclic GMP-AMP phosphodiesterase SMPDL3A (445 aa).

An N-terminal signal peptide occupies residues 1–22 (MALPGNFLCCLLVAWLCDPGLG). Residues Asp-42 and His-44 each contribute to the Zn(2+) site. A disulfide bridge connects residues Cys-59 and Cys-78. The N-linked (GlcNAc...) asparagine glycan is linked to Asn-66. Asp-107 contacts Zn(2+). His-111 serves as a coordination point for ATP. Residue Asn-128 is glycosylated (N-linked (GlcNAc...) asparagine). Asn-148 contributes to the Zn(2+) binding site. The ATP site is built by Asn-148 and His-149. N-linked (GlcNAc...) asparagine glycans are attached at residues Asn-219 and Asn-235. Residues His-249, His-290, and His-292 each coordinate Zn(2+). N-linked (GlcNAc...) asparagine glycosylation is found at Asn-353 and Asn-364. Cystine bridges form between Cys-417–Cys-421 and Cys-427–Cys-440.

Belongs to the acid sphingomyelinase family. Monomer. Homodimer; homodimerizes following 2',3'-cGAMP-binding. The cofactor is Zn(2+).

It is found in the secreted. The catalysed reaction is 2',3'-cGAMP + H2O = 5'-pGpA(2'-5') + H(+). The enzyme catalyses 5'-pGpA(2'-5') + H2O = 5'-GpA(2'-5') + phosphate. It catalyses the reaction a ribonucleoside 5'-triphosphate + H2O = a ribonucleoside 5'-diphosphate + phosphate + H(+). It carries out the reaction ATP + H2O = ADP + phosphate + H(+). Cyclic-nucleotide phosphodiesterase that acts as a negative regulator of innate immunity by mediating degradation of 2',3'-cGAMP, thereby inhibiting the cGAS-STING signaling. Specifically linearizes 2',3'-cGAMP into 2'5'-bond pGpA and further hydrolyzes pGpA to produce GpA. Also has in vitro nucleotide phosphodiesterase activity with nucleoside triphosphates, such as ATP. Has in vitro activity with p-nitrophenyl-TMP. Has lower activity with nucleoside diphosphates, and no activity with nucleoside monophosphates. Has in vitro activity with CDP-choline, giving rise to CMP and phosphocholine. Has in vitro activity with CDP-ethanolamine. Does not have sphingomyelin phosphodiesterase activity. The protein is Cyclic GMP-AMP phosphodiesterase SMPDL3A (Smpdl3a) of Rattus norvegicus (Rat).